The following is a 371-amino-acid chain: 4-hydroxy-3-methylbut-2-en-1-yl diphosphate synthase (flavodoxin) (371 aa).

Positions 270, 273, 305, and 312 each coordinate [4Fe-4S] cluster.

Belongs to the IspG family. [4Fe-4S] cluster serves as cofactor.

It catalyses the reaction (2E)-4-hydroxy-3-methylbut-2-enyl diphosphate + oxidized [flavodoxin] + H2O + 2 H(+) = 2-C-methyl-D-erythritol 2,4-cyclic diphosphate + reduced [flavodoxin]. The protein operates within isoprenoid biosynthesis; isopentenyl diphosphate biosynthesis via DXP pathway; isopentenyl diphosphate from 1-deoxy-D-xylulose 5-phosphate: step 5/6. Its function is as follows. Converts 2C-methyl-D-erythritol 2,4-cyclodiphosphate (ME-2,4cPP) into 1-hydroxy-2-methyl-2-(E)-butenyl 4-diphosphate. The sequence is that of 4-hydroxy-3-methylbut-2-en-1-yl diphosphate synthase (flavodoxin) from Shewanella loihica (strain ATCC BAA-1088 / PV-4).